Here is a 632-residue protein sequence, read N- to C-terminus: Nucleoside triphosphatase I (632 aa).

The Helicase ATP-binding domain maps to 42 to 204 (FLGLDKMHSL…IMLVNLLRPK (163 aa)). 55–62 (HETGVGKT) provides a ligand contact to ATP. The short motif at 141–144 (DECH) is the DEXH box element. A Helicase C-terminal domain is found at 367–532 (KFTDVCLRIL…EFTQLFKVFK (166 aa)). A binding to the cap-specific mRNA (nucleoside-2'-O-)-methyltransferase region spans residues 457–524 (DIFILDMTWN…DIIRNKSKEF (68 aa)).

The protein belongs to the helicase family. NPH I subfamily. In terms of assembly, monomer. Interacts (via C-terminus) with RAP94 (via N-terminus). Interacts with the cap-specific mRNA (nucleoside-2'-O-)-methyltransferase.

The protein localises to the virion. The enzyme catalyses a ribonucleoside 5'-triphosphate + H2O = a ribonucleoside 5'-diphosphate + phosphate + H(+). In terms of biological role, DNA-dependent ATPase required for providing the needed energy to achieve the termination of early transcripts. Acts in concert with the RAP94 subunit of the virion RNA polymerase and the capping enzyme/VTF to catalyze release of UUUUUNU-containing nascent RNA from the elongation complex. NPH-I must bind ssDNA in order to exhibit ATPase activity. The polypeptide is Nucleoside triphosphatase I (NPH1) (Rabbit fibroma virus (strain Kasza) (RFV)).